Consider the following 207-residue polypeptide: Dephospho-CoA kinase (207 aa).

The region spanning 4–203 (VIGLTGGIAS…EEGYIEKPNY (200 aa)) is the DPCK domain. Residue 12-17 (ASGKST) coordinates ATP.

The protein belongs to the CoaE family.

The protein resides in the cytoplasm. It catalyses the reaction 3'-dephospho-CoA + ATP = ADP + CoA + H(+). The protein operates within cofactor biosynthesis; coenzyme A biosynthesis; CoA from (R)-pantothenate: step 5/5. Its function is as follows. Catalyzes the phosphorylation of the 3'-hydroxyl group of dephosphocoenzyme A to form coenzyme A. This chain is Dephospho-CoA kinase, found in Staphylococcus aureus (strain bovine RF122 / ET3-1).